Consider the following 304-residue polypeptide: tRNA pseudouridine synthase B (304 aa).

Aspartate 38 serves as the catalytic Nucleophile.

It belongs to the pseudouridine synthase TruB family. Type 1 subfamily.

It catalyses the reaction uridine(55) in tRNA = pseudouridine(55) in tRNA. In terms of biological role, responsible for synthesis of pseudouridine from uracil-55 in the psi GC loop of transfer RNAs. This Geobacter sulfurreducens (strain ATCC 51573 / DSM 12127 / PCA) protein is tRNA pseudouridine synthase B.